The primary structure comprises 605 residues: Acetoin dehydrogenase operon transcriptional activator AcoR (605 aa).

Residues 295–520 (VIGQSGRSQA…LFNVFERLSI (226 aa)) enclose the Sigma-54 factor interaction domain. Residues 323–330 (GETGTGKE) and 387–396 (ANQGTLFLDE) contribute to the ATP site. A DNA-binding region (H-T-H motif) is located at residues 578–597 (VSQAAKISGIPRSTFYKRLK).

Acts as a transcriptional activator of the acoABCL operon encoding the acetoin dehydrogenase complex. The chain is Acetoin dehydrogenase operon transcriptional activator AcoR (acoR) from Bacillus subtilis (strain 168).